Here is a 1246-residue protein sequence, read N- to C-terminus: MGDMKTPDFDDLLAAFDIPDIDAKEAIQSDTHGNHNEHSSVVGKERSGSPSLRPSGSPDPPHNDPSVVSVIVKNSVHSDDKAEGNETGEFSSADESQKSPQKGPSKDSSVPTDPFIYNGLKSVSDGSTESPPSLDLAPGQHNGPLWSLSASKATGDDDKHNDAFTNHPASTFQSLPLSNHPSVSSHLISPNFSSKVDSEEAQAINGTLRAGVRRHQSEDEESEPDLGSPALVIQESPISQLCPAPKVPRMQRSPSSVFQPPSPSSPSLPVSNTQMEEPSVQHPKLHSSTNPTSLTSTNNLPVEEKDLEHIIEERDSPESPEPEISQSRTSLPSNSQGAIESKQRITREEAPQDEVMDVSMQEKVDYGAEATEGKSTEPTLVESASDAISNSASSKPLKMRIKTVKKPVVSITRTVSKAATKGGASKGSGASKVQAVARKSLQKIPRSVASPQLLSQSTKVAMLPVSTLQDASTAMLFAASRAQNQMPTALSATAVNITRTSNLPSISSSSIPGVNVRAASGQKTNTGTAKPASIVNSPGAVISRSQSSLVEAFNKILNSKNPLPSYQPDLTSLPPPEWGLRLPSTGYRCLECGDAFALERSLARHYDRRSMRIEVTCNHCSKRLAFFNKCSLLLHAREHKEKGLVMQCSHLVMSPVSVEQMIGQQDTVPIGVLSPAVSALSAIKESGVNLSQSSDHSCPECWSTFKGKQELVAHFQEVEPGGTDTCCLQCSPPMPLWNSCCAAAHRRMHQQLPPLVCPECGLICQTHELNTHLKQTCLHYSRRLGYKCACCHLVFGGVNSQNAVKTHMQTAHCEIFHKCPSCPMAFKSSSGAESHCASQHPELSESARQSKEIYKCVMCRTVFTQKSLLSVHIDTHLTKQKMHVFKCPDCNKLFTQRTSLLEHVKDTHRETSNHDGTSTQNSLVKMESSDGEEWGRDEEEDKGKVSDANSAVPRSQSWSCSQCQTHYTDKENYISHMTEQHGKELKKFPCTLCEGSFSSSSSLRRHIRVKHKGIKRVFYCQLCTGEKRSFSSKLILEKHIQAQHAGERGTATQSQAVPQFTDGADSSSEHDAGVLGGSSVEPESRLAESTLTRRIKGAPVGEQEAKGLRCMPCGFTTEDREEFLQHIVCHRDGGSGAQCQQCGACFASSSSLSRHLFISHRVRDSPSDHAEAALHTCATSVASDSAAAGGSPGSPLSVVGGLLEDGEGKHICKVCGRYFSKPADLNTHFRTHGMAFITAYKTDKPA.

Positions Lys24–Ser47 are enriched in basic and acidic residues. The disordered stretch occupies residues Lys24–Ala387. Polar residues-rich tracts occupy residues Gly88–Pro111 and Ala163–Lys195. Residues Ser287 to Pro301 are compositionally biased toward low complexity. Positions Val302–Pro317 are enriched in basic and acidic residues. Over residues Gln326–Ala338 the composition is skewed to polar residues. Composition is skewed to basic and acidic residues over residues Ser341–Ala350 and Met360–Ser375. A C2H2-type 1 zinc finger spans residues Tyr587–His619. Residues His696–Glu719 form a C2H2-type 2; degenerate zinc finger. 3 consecutive C2H2-type zinc fingers follow at residues His817–His840, Tyr854–His876, and Phe885–His908. The disordered stretch occupies residues Thr907 to Pro953. Residues His914–Leu923 are compositionally biased toward polar residues. The span at Ser929–Glu940 shows a compositional bias: acidic residues. 2 consecutive C2H2-type zinc fingers follow at residues Trp958–His981 and Phe988–His1011. A C2H2-type 8; degenerate zinc finger spans residues Phe1018–His1044. Residues Ala1045 to Arg1093 form a disordered region. 2 consecutive C2H2-type zinc fingers follow at residues Ala1137–His1160 and His1210–His1232.

Belongs to the krueppel C2H2-type zinc-finger protein family. In terms of tissue distribution, widely expressed with highest levels in kidney, spleen and ovary.

It is found in the nucleus. In terms of biological role, may be involved in transcriptional regulation. The protein is Zinc finger protein 687a (znf687a) of Danio rerio (Zebrafish).